We begin with the raw amino-acid sequence, 228 residues long: N-acetyltransferase family 8 member 3 (228 aa).

Helical transmembrane passes span 36-56 (MLLLPGTLLILLGVPLTLFLA) and 58-78 (GSWLLVLLSTLTLLVSLWLLA). An N-acetyltransferase domain is found at 61–217 (LLVLLSTLTL…RNSPMICLKY (157 aa)).

The protein belongs to the camello family.

It localises to the nucleus membrane. Its subcellular location is the cytoplasm. It is found in the perinuclear region. It catalyses the reaction L-lysyl-[protein] + acetyl-CoA = N(6)-acetyl-L-lysyl-[protein] + CoA + H(+). In terms of biological role, has histone acetyltransferase activity in vitro, with specificity for histone H4. The sequence is that of N-acetyltransferase family 8 member 3 from Rattus norvegicus (Rat).